The chain runs to 319 residues: Lambda-crystallin homolog (319 aa).

Ala-2 is subject to N-acetylalanine. At Ser-3 the chain carries Phosphoserine. NAD(+) contacts are provided by residues Leu-16 to Ile-17, Asp-36, Glu-97, and Lys-102.

The protein belongs to the 3-hydroxyacyl-CoA dehydrogenase family. In terms of assembly, homodimer.

The protein localises to the cytoplasm. It carries out the reaction L-gulonate + NAD(+) = 3-dehydro-L-gulonate + NADH + H(+). Inhibited by malonate. Functionally, has high L-gulonate 3-dehydrogenase activity. It also exhibits low dehydrogenase activity toward L-3-hydroxybutyrate (HBA) and L-threonate. This is Lambda-crystallin homolog (Cryl1) from Rattus norvegicus (Rat).